The sequence spans 479 residues: RAC-gamma serine/threonine-protein kinase (479 aa).

At Ser2 the chain carries N-acetylserine. The 103-residue stretch at 5–107 (TIVKEDWVQK…WTEAIQAVAD (103 aa)) folds into the PH domain. The cysteines at positions 59 and 76 are disulfide-linked. The Protein kinase domain maps to 148–405 (FDYLKLLGKG…PKEIMRHSFF (258 aa)). ATP is bound by residues 154–162 (LGKGTFGKV) and Lys177. Asp271 (proton acceptor) is an active-site residue. Cys293 and Cys307 are joined by a disulfide. O-linked (GlcNAc) threonine glycosylation is present at Thr302. At Thr305 the chain carries Phosphothreonine; by PDPK1. Thr309 carries an O-linked (GlcNAc) threonine glycan. One can recognise an AGC-kinase C-terminal domain in the interval 406 to 479 (SGVNWQDVYD…QFSYSASGRE (74 aa)). Positions 446–479 (ITPPEKDDDDGMDCMDNERRPHFPQFSYSASGRE) are disordered. Residue Thr447 is modified to Phosphothreonine. Positions 451-460 (KDDDDGMDCM) are enriched in acidic residues. Ser472 bears the Phosphoserine; by PKC/PRKCZ mark. An O-linked (GlcNAc) serine; alternate glycan is attached at Ser472.

This sequence belongs to the protein kinase superfamily. AGC Ser/Thr protein kinase family. RAC subfamily. Interacts (via PH domain) with TCL1A; this enhances AKT3 phosphorylation and activation. Interacts with TRAF6. Interacts with KCTD20. Interacts with BTBD10. In terms of processing, phosphorylation on Thr-305 and Ser-472 is required for full activity. Phosphorylation of the activation loop at Thr-305 by PDPK1/PDK1 is a prerequisite for full activation. Phosphorylation at Ser-472 by mTORC2 in response to growth factors plays a key role in AKT1 activation by facilitating subsequent phosphorylation of the activation loop by PDPK1/PDK1. Ubiquitinated. When fully phosphorylated and translocated into the nucleus, undergoes 'Lys-48'-polyubiquitination catalyzed by TTC3, leading to its degradation by the proteasome. Post-translationally, O-GlcNAcylation at Thr-302 and Thr-309 inhibits activating phosphorylation at Thr-305 via disrupting the interaction between AKT and PDPK1/PDK1.

The protein resides in the nucleus. The protein localises to the cytoplasm. It localises to the membrane. The catalysed reaction is L-seryl-[protein] + ATP = O-phospho-L-seryl-[protein] + ADP + H(+). It catalyses the reaction L-threonyl-[protein] + ATP = O-phospho-L-threonyl-[protein] + ADP + H(+). Two specific sites, one in the kinase domain (Thr-305) and the other in the C-terminal regulatory region (Ser-472), need to be phosphorylated for its full activation. IGF-1 leads to the activation of AKT3, which may play a role in regulating cell survival. Its function is as follows. AKT3 is one of 3 closely related serine/threonine-protein kinases (AKT1, AKT2 and AKT3) called the AKT kinase, and which regulate many processes including metabolism, proliferation, cell survival, growth and angiogenesis. This is mediated through serine and/or threonine phosphorylation of a range of downstream substrates. Over 100 substrate candidates have been reported so far, but for most of them, no isoform specificity has been reported. AKT3 is the least studied AKT isoform. It plays an important role in brain development and is crucial for the viability of malignant glioma cells. AKT3 isoform may also be the key molecule in up-regulation and down-regulation of MMP13 via IL13. Required for the coordination of mitochondrial biogenesis with growth factor-induced increases in cellular energy demands. Down-regulation by RNA interference reduces the expression of the phosphorylated form of BAD, resulting in the induction of caspase-dependent apoptosis. This chain is RAC-gamma serine/threonine-protein kinase (Akt3), found in Rattus norvegicus (Rat).